Here is a 347-residue protein sequence, read N- to C-terminus: Anthranilate phosphoribosyltransferase (347 aa).

5-phospho-alpha-D-ribose 1-diphosphate contacts are provided by residues glycine 88, 91 to 92 (GD), threonine 96, 98 to 101 (NIST), 116 to 124 (KHGNRSVSS), and serine 128. Glycine 88 provides a ligand contact to anthranilate. Serine 100 provides a ligand contact to Mg(2+). Anthranilate is bound at residue asparagine 119. Arginine 174 provides a ligand contact to anthranilate. Aspartate 232 and glutamate 233 together coordinate Mg(2+).

Belongs to the anthranilate phosphoribosyltransferase family. Homodimer. Requires Mg(2+) as cofactor.

It catalyses the reaction N-(5-phospho-beta-D-ribosyl)anthranilate + diphosphate = 5-phospho-alpha-D-ribose 1-diphosphate + anthranilate. It functions in the pathway amino-acid biosynthesis; L-tryptophan biosynthesis; L-tryptophan from chorismate: step 2/5. Its function is as follows. Catalyzes the transfer of the phosphoribosyl group of 5-phosphorylribose-1-pyrophosphate (PRPP) to anthranilate to yield N-(5'-phosphoribosyl)-anthranilate (PRA). The chain is Anthranilate phosphoribosyltransferase from Shewanella sp. (strain ANA-3).